The following is a 72-amino-acid chain: Galensin (72 aa).

The N-terminal stretch at 1–22 (MLTLKKSMLLLFFLGLVSVSLA) is a signal peptide. The propeptide occupies 23–48 (DDKREDEAEEGEDKRAAEEERNVEKR). Residue phenylalanine 71 is modified to Phenylalanine amide.

It belongs to the frog skin active peptide (FSAP) family. Brevinin subfamily. In terms of assembly, homodimer; disulfide-linked. In terms of tissue distribution, expressed by the skin glands.

Its subcellular location is the secreted. In terms of biological role, antibacterial activity against the Gram-positive bacterium M.luteus and the Gram-negative bacterium E.coli. In Kassina senegalensis (Senegal running frog), this protein is Galensin.